The primary structure comprises 258 residues: Trans-aconitate 2-methyltransferase (258 aa).

The protein belongs to the methyltransferase superfamily. Tam family.

The protein localises to the cytoplasm. The enzyme catalyses trans-aconitate + S-adenosyl-L-methionine = (E)-3-(methoxycarbonyl)pent-2-enedioate + S-adenosyl-L-homocysteine. In terms of biological role, catalyzes the S-adenosylmethionine monomethyl esterification of trans-aconitate. This is Trans-aconitate 2-methyltransferase from Yersinia pestis bv. Antiqua (strain Antiqua).